Here is a 1073-residue protein sequence, read N- to C-terminus: Pharyngeal muscle protein 2 (1073 aa).

The SAP domain maps to 9 to 43 (INDLRVSELKTELEKRGLSTQGVKVVLTVRLNKAL). Disordered stretches follow at residues 59–186 (VSPM…PEVV), 207–305 (ELKE…SMET), and 337–388 (LLED…KSML). Residues 91 to 111 (EGNDENVLVEEKEEEEEEEDS) show a composition bias toward acidic residues. Over residues 112 to 127 (HDLQIIEDHELEVPSD) the composition is skewed to basic and acidic residues. The segment covering 128-151 (EKDDTLVEDEEFEEAEQVEPEPEA) has biased composition (acidic residues). Basic and acidic residues-rich tracts occupy residues 156–182 (VEEK…KPVE) and 207–217 (ELKEKPEKEPE). Acidic residues-rich tracts occupy residues 223–232 (EPVEQLENEP) and 248–265 (QDGE…DIEI). Over residues 277 to 293 (AEEKVEKKEKKPEEIPH) the composition is skewed to basic and acidic residues. Residues 366 to 386 (ASTPQATPSKAASSSAGSGKS) are compositionally biased toward low complexity. The 83-residue stretch at 396 to 478 (TSIWIRGMTP…RVLRVEKVSE (83 aa)) folds into the RRM domain. Disordered regions lie at residues 481–759 (LTSS…ERRR), 845–917 (QEHR…RNLV), and 1015–1073 (SQNA…RGNY). Composition is skewed to low complexity over residues 496–505 (EAASTMSTSP) and 513–524 (PVVTTTTTTSAA). A compositionally biased stretch (basic and acidic residues) spans 573–587 (ITFDREEESNRDSRR). The segment covering 588–622 (TIAAAPPARTSRMARSPLRAPLRAARGSESSRSST) has biased composition (low complexity). Residues 674–689 (VTVQQDAPRASYQTEQ) show a composition bias toward polar residues. Basic and acidic residues-rich tracts occupy residues 707–727 (VSPD…RRAP) and 742–759 (PPRR…ERRR). 3 stretches are compositionally biased toward low complexity: residues 901–917 (SSSN…RNLV), 1015–1026 (SQNAATPSTSTS), and 1034–1060 (QWQQ…SSSN).

Expressed in most tissues including the hypodermal, muscle, neuronal, vulval and intestinal tissues. Isoform a: Expressed in the pharynx, nerve ring, intestine, neurons and ventral nerve cord.

It localises to the nucleus. In terms of biological role, involved in pharyngeal muscle development and ensures pharyngeal grinder function during feeding. Plays a role in the defense against the accumulation of ingested live pathogenic bacteria in the intestine. Has a role in the determination of life span. This is Pharyngeal muscle protein 2 from Caenorhabditis elegans.